A 118-amino-acid chain; its full sequence is Urease subunit beta (118 aa).

The protein belongs to the urease beta subunit family. In terms of assembly, heterotrimer of UreA (gamma), UreB (beta) and UreC (alpha) subunits. Three heterotrimers associate to form the active enzyme.

It is found in the cytoplasm. The catalysed reaction is urea + 2 H2O + H(+) = hydrogencarbonate + 2 NH4(+). Its pathway is nitrogen metabolism; urea degradation; CO(2) and NH(3) from urea (urease route): step 1/1. This chain is Urease subunit beta, found in Aliivibrio fischeri (strain MJ11) (Vibrio fischeri).